The chain runs to 167 residues: Peptide deformylase (167 aa).

Fe cation contacts are provided by Cys-91 and His-133. Residue Glu-134 is part of the active site. His-137 serves as a coordination point for Fe cation.

The protein belongs to the polypeptide deformylase family. Fe(2+) is required as a cofactor.

It carries out the reaction N-terminal N-formyl-L-methionyl-[peptide] + H2O = N-terminal L-methionyl-[peptide] + formate. Functionally, removes the formyl group from the N-terminal Met of newly synthesized proteins. Requires at least a dipeptide for an efficient rate of reaction. N-terminal L-methionine is a prerequisite for activity but the enzyme has broad specificity at other positions. The chain is Peptide deformylase from Nitrosococcus oceani (strain ATCC 19707 / BCRC 17464 / JCM 30415 / NCIMB 11848 / C-107).